The chain runs to 224 residues: NADH-quinone oxidoreductase subunit B (224 aa).

The [4Fe-4S] cluster site is built by cysteine 67, cysteine 68, cysteine 133, and cysteine 162. The disordered stretch occupies residues 200 to 224 (DMPAEKDRKRGERIKVTNLRTPDEI). The segment covering 201 to 224 (MPAEKDRKRGERIKVTNLRTPDEI) has biased composition (basic and acidic residues).

The protein belongs to the complex I 20 kDa subunit family. As to quaternary structure, NDH-1 is composed of 14 different subunits. Subunits NuoB, C, D, E, F, and G constitute the peripheral sector of the complex. [4Fe-4S] cluster serves as cofactor.

It is found in the cell inner membrane. The catalysed reaction is a quinone + NADH + 5 H(+)(in) = a quinol + NAD(+) + 4 H(+)(out). Functionally, NDH-1 shuttles electrons from NADH, via FMN and iron-sulfur (Fe-S) centers, to quinones in the respiratory chain. The immediate electron acceptor for the enzyme in this species is believed to be ubiquinone. Couples the redox reaction to proton translocation (for every two electrons transferred, four hydrogen ions are translocated across the cytoplasmic membrane), and thus conserves the redox energy in a proton gradient. The chain is NADH-quinone oxidoreductase subunit B from Aeromonas salmonicida (strain A449).